A 299-amino-acid polypeptide reads, in one-letter code: Regucalcin (299 aa).

E18 provides a ligand contact to a divalent metal cation. Residues R101, N103, and E121 each coordinate substrate. The a divalent metal cation site is built by N154 and D204. D204 acts as the Proton donor/acceptor in catalysis.

This sequence belongs to the SMP-30/CGR1 family. Zn(2+) serves as cofactor. The cofactor is Mn(2+). Requires Ca(2+) as cofactor. It depends on Mg(2+) as a cofactor.

The protein localises to the cytoplasm. The enzyme catalyses D-glucono-1,5-lactone + H2O = D-gluconate + H(+). It functions in the pathway cofactor biosynthesis; L-ascorbate biosynthesis via UDP-alpha-D-glucuronate pathway; L-ascorbate from UDP-alpha-D-glucuronate: step 3/4. Its function is as follows. Gluconolactonase with low activity towards other sugar lactones, including gulonolactone and galactonolactone. Catalyzes a key step in ascorbic acid (vitamin C) biosynthesis. Can also hydrolyze diisopropyl phosphorofluoridate and phenylacetate (in vitro). Calcium-binding protein. Modulates Ca(2+) signaling, and Ca(2+)-dependent cellular processes and enzyme activities. The chain is Regucalcin from Gallus gallus (Chicken).